The following is a 225-amino-acid chain: Glycerol-3-phosphate acyltransferase (225 aa).

A run of 6 helical transmembrane segments spans residues 6 to 26 (FFFF…LIIG), 55 to 75 (WGIV…IICL), 95 to 115 (DIAI…SIFN), 135 to 155 (PFIG…VGYA), 160 to 180 (IMAT…PGIT), and 187 to 207 (ILYF…HSNI).

The protein belongs to the PlsY family. Probably interacts with PlsX.

The protein localises to the cell membrane. It catalyses the reaction an acyl phosphate + sn-glycerol 3-phosphate = a 1-acyl-sn-glycero-3-phosphate + phosphate. Its pathway is lipid metabolism; phospholipid metabolism. In terms of biological role, catalyzes the transfer of an acyl group from acyl-phosphate (acyl-PO(4)) to glycerol-3-phosphate (G3P) to form lysophosphatidic acid (LPA). This enzyme utilizes acyl-phosphate as fatty acyl donor, but not acyl-CoA or acyl-ACP. This Phytoplasma australiense protein is Glycerol-3-phosphate acyltransferase.